A 607-amino-acid chain; its full sequence is Chaperone protein DnaK (607 aa).

Thr-174 carries the post-translational modification Phosphothreonine; by autocatalysis. Polar residues predominate over residues 577–594 (QSAGSTAGNPGQGQSTEN). The disordered stretch occupies residues 577–607 (QSAGSTAGNPGQGQSTENPGGKTIDGDYKVN).

This sequence belongs to the heat shock protein 70 family.

Functionally, acts as a chaperone. The chain is Chaperone protein DnaK from Dictyoglomus turgidum (strain DSM 6724 / Z-1310).